A 194-amino-acid polypeptide reads, in one-letter code: Phosphoheptose isomerase (194 aa).

The 155-residue stretch at 34-188 (LANIFTKGKK…IEGVERIMFP (155 aa)) folds into the SIS domain. Position 49 to 51 (49 to 51 (NGG)) interacts with substrate. Residues His-58 and Glu-62 each contribute to the Zn(2+) site. Substrate contacts are provided by residues Glu-62, 90-91 (ND), 116-118 (STS), Ser-121, and Gln-168. 2 residues coordinate Zn(2+): Gln-168 and His-176.

The protein belongs to the SIS family. GmhA subfamily. It depends on Zn(2+) as a cofactor.

The protein localises to the cytoplasm. It catalyses the reaction 2 D-sedoheptulose 7-phosphate = D-glycero-alpha-D-manno-heptose 7-phosphate + D-glycero-beta-D-manno-heptose 7-phosphate. It functions in the pathway carbohydrate biosynthesis; D-glycero-D-manno-heptose 7-phosphate biosynthesis; D-glycero-alpha-D-manno-heptose 7-phosphate and D-glycero-beta-D-manno-heptose 7-phosphate from sedoheptulose 7-phosphate: step 1/1. Catalyzes the isomerization of sedoheptulose 7-phosphate in D-glycero-D-manno-heptose 7-phosphate. The chain is Phosphoheptose isomerase from Fusobacterium nucleatum subsp. nucleatum (strain ATCC 25586 / DSM 15643 / BCRC 10681 / CIP 101130 / JCM 8532 / KCTC 2640 / LMG 13131 / VPI 4355).